A 249-amino-acid chain; its full sequence is tRNA (guanine-N(1)-)-methyltransferase (249 aa).

Residues Gly112 and Leu132–Leu137 contribute to the S-adenosyl-L-methionine site.

Belongs to the RNA methyltransferase TrmD family. In terms of assembly, homodimer.

It is found in the cytoplasm. It catalyses the reaction guanosine(37) in tRNA + S-adenosyl-L-methionine = N(1)-methylguanosine(37) in tRNA + S-adenosyl-L-homocysteine + H(+). Its function is as follows. Specifically methylates guanosine-37 in various tRNAs. This Geobacter sp. (strain M21) protein is tRNA (guanine-N(1)-)-methyltransferase.